We begin with the raw amino-acid sequence, 125 residues long: Small ribosomal subunit protein uS12 (125 aa).

The tract at residues 1–27 (MPTINQLVRKGREKGEQKSTAPALKSC) is disordered. The residue at position 89 (D89) is a 3-methylthioaspartic acid. Residues 103-125 (DASGVQKRNQGRSKYGTKRPKKK) form a disordered region. Positions 111–125 (NQGRSKYGTKRPKKK) are enriched in basic residues.

It belongs to the universal ribosomal protein uS12 family. In terms of assembly, part of the 30S ribosomal subunit. Contacts proteins S8 and S17. May interact with IF1 in the 30S initiation complex.

Functionally, with S4 and S5 plays an important role in translational accuracy. Its function is as follows. Interacts with and stabilizes bases of the 16S rRNA that are involved in tRNA selection in the A site and with the mRNA backbone. Located at the interface of the 30S and 50S subunits, it traverses the body of the 30S subunit contacting proteins on the other side and probably holding the rRNA structure together. The combined cluster of proteins S8, S12 and S17 appears to hold together the shoulder and platform of the 30S subunit. This Syntrophomonas wolfei subsp. wolfei (strain DSM 2245B / Goettingen) protein is Small ribosomal subunit protein uS12.